A 336-amino-acid chain; its full sequence is Calcium uniporter protein 3, mitochondrial (336 aa).

A mitochondrion-targeting transit peptide spans M1–R69. 2 consecutive transmembrane segments (helical) span residues L231–W251 and V257–F277. The Selectivity filter signature appears at W255–F263. Position 259 (E259) interacts with Ca(2+).

It belongs to the MCU (TC 1.A.77) family.

The protein resides in the mitochondrion inner membrane. The catalysed reaction is Ca(2+)(in) = Ca(2+)(out). Mitochondrial inner membrane calcium uniporter that mediates calcium uptake into mitochondria. Constitutes a pore-forming and calcium-conducting subunit. Mitochondrial calcium homeostasis plays key roles in cellular physiology and regulates cell bioenergetics, cytoplasmic calcium signals and activation of cell death pathways. This Arabidopsis thaliana (Mouse-ear cress) protein is Calcium uniporter protein 3, mitochondrial.